We begin with the raw amino-acid sequence, 430 residues long: F-box/kelch-repeat protein At4g33290 (430 aa).

Positions 1 to 44 (MITDLPKDLIEEILSRVSMTSMRVVRLTCKSWNTLSNSESFKKM) constitute an F-box domain. 3 Kelch repeats span residues 161–207 (LLRF…CVQG), 312–363 (VPFI…IIEE), and 383–430 (LVRI…RPTR).

The polypeptide is F-box/kelch-repeat protein At4g33290 (Arabidopsis thaliana (Mouse-ear cress)).